A 267-amino-acid polypeptide reads, in one-letter code: RWD domain-containing protein 3 (267 aa).

Residues 7 to 114 (QELSALAAIF…LWIQQNLRLV (108 aa)) form the RWD domain. Interaction with UBE2I/UBC9 regions lie at residues 13-15 (AAI) and 100-102 (VHE).

In terms of assembly, interacts with UBE2I/UBC9, NFKBIA, HIF1A and NCOA2.

The protein resides in the nucleus. It is found in the cytoplasm. Enhancer of SUMO conjugation. Via its interaction with UBE2I/UBC9, increases SUMO conjugation to proteins by promoting the binding of E1 and E2 enzymes, thioester linkage between SUMO and UBE2I/UBC9 and transfer of SUMO to specific target proteins which include HIF1A, PIAS, NFKBIA, NR3C1 and TOP1. Positively regulates the NF-kappa-B signaling pathway by enhancing the sumoylation of NF-kappa-B inhibitor alpha (NFKBIA), promoting its stabilization which consequently leads to an increased inhibition of NF-kappa-B transcriptional activity. Negatively regulates the hypoxia-inducible factor-1 alpha (HIF1A) signaling pathway by increasing the sumoylation of HIF1A, promoting its stabilization, transcriptional activity and the expression of its target gene VEGFA during hypoxia. Has no effect on ubiquitination. The sequence is that of RWD domain-containing protein 3 (Rwdd3) from Mus musculus (Mouse).